Consider the following 566-residue polypeptide: Chondroitin sulfate proteoglycan 5 (566 aa).

The signal sequence occupies residues 1 to 30; that stretch reads MGRAGGGGPDWGPPPVLLLLGVTLVLTAGA. The Extracellular segment spans residues 31-423; it reads VPARETGSAI…SIITDFQVMC (393 aa). O-linked (Xyl...) (chondroitin sulfate) serine glycosylation occurs at serine 38. Positions 56–93 are disordered; that stretch reads ANDTREEAGLPAAGEDETSWTERGSEMAAVGPGVGPEE. The N-linked (GlcNAc...) asparagine glycan is linked to asparagine 57. Threonine 76 is a glycosylation site (O-linked (GalNAc...) threonine). Serine 123 carries an O-linked (Xyl...) (chondroitin sulfate) serine glycan. Residue threonine 132 is glycosylated (O-linked (GalNAc...) threonine). Disordered regions lie at residues 137–173, 218–249, and 263–327; these read DEAL…GPEL, DSEG…TPSW, and ESDF…PPQH. Serine 143 carries O-linked (GalNAc...) serine glycosylation. Residues threonine 144, threonine 153, and threonine 155 are each glycosylated (O-linked (GalNAc...) threonine). Serine 156 and serine 160 each carry an O-linked (GalNAc...) serine glycan. The span at 163–173 shows a compositional bias: basic and acidic residues; sequence VHDKPSVGPEL. Residue threonine 235 is glycosylated (O-linked (GalNAc...) threonine). The tract at residues 265–301 is interaction with TNC and TNR; that stretch reads DFYPTTSFYDDLEEEEEEEEDKDTVGGGDLEDENDLL. Residues 274 to 286 show a composition bias toward acidic residues; sequence DDLEEEEEEEEDK. Asparagine 355 and asparagine 367 each carry an N-linked (GlcNAc...) asparagine glycan. An EGF-like domain is found at 371 to 413; sequence RSVCDLFPSYCHNGGQCYLVENIGAFCRCNTQDYIWHKGMRCE. Cystine bridges form between cysteine 374/cysteine 387, cysteine 381/cysteine 397, and cysteine 399/cysteine 412. Phosphoserine is present on residues glycine 394 and phenylalanine 396. Position 397 is a phosphothreonine (cysteine 397). A helical transmembrane segment spans residues 424-444; the sequence is VAVGSAALVLLLLFMMTVFFA. Residues 442-460 form an interaction with GOPC region; that stretch reads FFAKKLYLLKTENTKLRRT. The Cytoplasmic portion of the chain corresponds to 445–566; it reads KKLYLLKTEN…GVNCLQNNLT (122 aa). A phosphoserine mark is found at serine 467, serine 475, and serine 477. Phosphothreonine is present on threonine 478. 2 positions are modified to phosphoserine: serine 483 and serine 543. The disordered stretch occupies residues 531–566; it reads KEEESFNIQNSMSPKLEGGKGDQDDLGVNCLQNNLT.

Binds TNR and probably TNC. Interacts with ERBB3 and GOPC. Interacts with MDK; this interaction is independent of the presence of chondroitin sulfate chains and promotes elongation of oligodendroglial precursor-like cells. In terms of processing, N-glycosylated. Post-translationally, O-glycosylated; contains chondroitin sulfate glycans. Part-time proteoglycan, expressed in part as a proteoglycan exhibiting chondroitin sulfate glycans and in part as a non-proteoglycan form. The relative amount of both forms depends on tissues and tissue maturation. In the cerebellum the 2 forms coexist while in the cerebrum the proteoglycan form is predominant. Phosphorylated; in intracellular and extracellular parts. Expressed in olfactory bulb, hippocampus, brain stem, spinal cord, cerebrum and cerebellum. Expressed by Purkinje cells in the cerebellum (at protein level). Expressed in immature and mature cerebellum (isoform 1, isoform 2 and isoform 3).

The protein localises to the cell membrane. It localises to the synaptic cell membrane. It is found in the endoplasmic reticulum membrane. The protein resides in the golgi apparatus membrane. Its subcellular location is the cell surface. The protein localises to the secreted. Functionally, may function as a growth and differentiation factor involved in neuritogenesis. May induce ERBB3 activation. The polypeptide is Chondroitin sulfate proteoglycan 5 (Cspg5) (Mus musculus (Mouse)).